A 267-amino-acid chain; its full sequence is Undecaprenyl-diphosphatase (267 aa).

8 consecutive transmembrane segments (helical) span residues 4–24 (ILIIIILGIVEGITEFFPISS), 41–61 (NIQNIIKIIQIGPIFSIILLF), 84–104 (ILILFNLVLSCIPISILGFMF), 116–136 (YISYFLILGSIFFILSEFISL), 160–180 (CFSLLPGVSRLGITISIGLIL), 185–205 (YVLFKFSMILFSSIMPAVLIL), 216–236 (ENIFFVIIGVMSSFLTSLIFG), and 246–266 (TSLIIFAIYRIFIACIILFTC).

Belongs to the UppP family.

Its subcellular location is the cell membrane. The catalysed reaction is di-trans,octa-cis-undecaprenyl diphosphate + H2O = di-trans,octa-cis-undecaprenyl phosphate + phosphate + H(+). Catalyzes the dephosphorylation of undecaprenyl diphosphate (UPP). Confers resistance to bacitracin. The chain is Undecaprenyl-diphosphatase from Wigglesworthia glossinidia brevipalpis.